Consider the following 266-residue polypeptide: Cell wall synthesis protein Wag31 (266 aa).

Residues 31–64 adopt a coiled-coil conformation; that stretch reads FLDLVENELTQLIEENSDLRQRIEELDHELAAGG. Threonine 77 is subject to Phosphothreonine. The stretch at 152–203 forms a coiled coil; sequence TAEATVAEAQQRADAMLADAQTRSEVQSRQAQEKADALQAEAERKHSEIMGA. The segment at 239 to 266 is disordered; it reads ELGQRGSAAPVDSNADAGGFDQFNRGNN.

It belongs to the DivIVA family. As to quaternary structure, forms homooligomers. Post-translationally, phosphorylated by PknA.

It is found in the cytoplasm. Its function is as follows. Important for maintaining cell shape and cell wall integrity by localizing peptidoglycan synthesis to the cell poles. The polypeptide is Cell wall synthesis protein Wag31 (wag31) (Mycobacterium leprae (strain TN)).